The sequence spans 629 residues: Chaperone protein DnaK (629 aa).

The segment covering 576 to 587 (QAYQQQQDAQAG) has biased composition (low complexity). The segment at 576 to 629 (QAYQQQQDAQAGAAGGAGGMGGMGGMADGPGGAADADGDDEEYVDADFEDVDEE) is disordered. The segment covering 588 to 607 (AAGGAGGMGGMGGMADGPGG) has biased composition (gly residues). Positions 611-629 (ADGDDEEYVDADFEDVDEE) are enriched in acidic residues.

Belongs to the heat shock protein 70 family.

In terms of biological role, acts as a chaperone. The protein is Chaperone protein DnaK of Halobacterium salinarum (strain ATCC 29341 / DSM 671 / R1).